A 269-amino-acid chain; its full sequence is MPELPEVETSRRGIEPHLVGATILHAHIRNGRLRWPVSDKIYRLSDTPVLSVQRRAKYLLLELPDGWIIIHLGMSGSLRILSEALPAEKHDHVDLVMSNGKILRYTDPRRFGAWLWTKELEGHNVLAHLGPEPLSDEFNGEYLQQKCAKKKTAIKPWLMDNKLVVGVGNIYASESLFAAGIHPDRLASSLSTEECDLLARVIKAVLLRSIEQGGTTLKDFLQSDGKPGYFAQELQVYGRKGEPCRVCGTPIVATKHAQRATFYCRHCQK.

Catalysis depends on Pro2, which acts as the Schiff-base intermediate with DNA. The active-site Proton donor is Glu3. The Proton donor; for beta-elimination activity role is filled by Lys57. His90, Arg109, and Lys150 together coordinate DNA. The segment at 235 to 269 (QVYGRKGEPCRVCGTPIVATKHAQRATFYCRHCQK) adopts an FPG-type zinc-finger fold. Arg259 serves as the catalytic Proton donor; for delta-elimination activity.

Belongs to the FPG family. As to quaternary structure, monomer. Requires Zn(2+) as cofactor.

The catalysed reaction is Hydrolysis of DNA containing ring-opened 7-methylguanine residues, releasing 2,6-diamino-4-hydroxy-5-(N-methyl)formamidopyrimidine.. It catalyses the reaction 2'-deoxyribonucleotide-(2'-deoxyribose 5'-phosphate)-2'-deoxyribonucleotide-DNA = a 3'-end 2'-deoxyribonucleotide-(2,3-dehydro-2,3-deoxyribose 5'-phosphate)-DNA + a 5'-end 5'-phospho-2'-deoxyribonucleoside-DNA + H(+). Involved in base excision repair of DNA damaged by oxidation or by mutagenic agents. Acts as a DNA glycosylase that recognizes and removes damaged bases. Has a preference for oxidized purines, such as 7,8-dihydro-8-oxoguanine (8-oxoG). Has AP (apurinic/apyrimidinic) lyase activity and introduces nicks in the DNA strand. Cleaves the DNA backbone by beta-delta elimination to generate a single-strand break at the site of the removed base with both 3'- and 5'-phosphates. The chain is Formamidopyrimidine-DNA glycosylase from Salmonella dublin (strain CT_02021853).